Consider the following 292-residue polypeptide: Small ribosomal subunit biogenesis GTPase RsgA (292 aa).

The 158-residue stretch at 64–221 folds into the CP-type G domain; that stretch reads RSELFRPAVA…LVDTPGFSSL (158 aa). Residues 113–116 and 164–172 each bind GTP; these read NKMD and GPSGVGKST. Residues Cys-245, Cys-250, His-252, and Cys-258 each coordinate Zn(2+).

The protein belongs to the TRAFAC class YlqF/YawG GTPase family. RsgA subfamily. As to quaternary structure, monomer. Associates with 30S ribosomal subunit, binds 16S rRNA. The cofactor is Zn(2+).

Its subcellular location is the cytoplasm. One of several proteins that assist in the late maturation steps of the functional core of the 30S ribosomal subunit. Helps release RbfA from mature subunits. May play a role in the assembly of ribosomal proteins into the subunit. Circularly permuted GTPase that catalyzes slow GTP hydrolysis, GTPase activity is stimulated by the 30S ribosomal subunit. In Clostridium botulinum (strain Loch Maree / Type A3), this protein is Small ribosomal subunit biogenesis GTPase RsgA.